The sequence spans 952 residues: Alpha-L-rhamnosidase (952 aa).

The N-terminal stretch at 1-21 (MKYNKLLFSLLLLAVFCFSCK) is a signal peptide. Alpha-L-rhamnose is bound by residues aspartate 520, 524-525 (RE), aspartate 532, and tryptophan 594. The active-site Proton donor is glutamate 525. Residue glutamate 809 is the Proton acceptor of the active site. Histidine 826 is a binding site for alpha-L-rhamnose.

This sequence belongs to the glycosyl hydrolase 78 family.

The protein localises to the cell membrane. The catalysed reaction is Hydrolysis of terminal non-reducing alpha-L-rhamnose residues in alpha-L-rhamnosides.. Its function is as follows. Alpha-L-rhamnosidase that may be involved in ulvan degradation. Ulvan is the main polysaccharide component of the Ulvales (green seaweed) cell wall. It is composed of disaccharide building blocks comprising 3-sulfated rhamnose (Rha3S) linked to D-glucuronic acid (GlcA), L-iduronic acid (IduA), or D-xylose (Xyl). This Formosa agariphila (strain DSM 15362 / KCTC 12365 / LMG 23005 / KMM 3901 / M-2Alg 35-1) protein is Alpha-L-rhamnosidase.